The primary structure comprises 419 residues: S-adenosylmethionine synthase (419 aa).

Histidine 15 serves as a coordination point for ATP. Mg(2+) is bound at residue aspartate 17. K(+) is bound at residue glutamate 43. L-methionine is bound by residues glutamate 56 and glutamine 100. The flexible loop stretch occupies residues 100–110; it reads QSPDIAQGVDE. Residues 171-173, 248-249, aspartate 257, 263-264, alanine 280, and lysine 284 contribute to the ATP site; these read DGK, KF, and RK. Aspartate 257 contacts L-methionine. An L-methionine-binding site is contributed by lysine 288.

It belongs to the AdoMet synthase family. As to quaternary structure, homotetramer; dimer of dimers. It depends on Mg(2+) as a cofactor. Requires K(+) as cofactor.

It localises to the cytoplasm. The catalysed reaction is L-methionine + ATP + H2O = S-adenosyl-L-methionine + phosphate + diphosphate. The protein operates within amino-acid biosynthesis; S-adenosyl-L-methionine biosynthesis; S-adenosyl-L-methionine from L-methionine: step 1/1. Catalyzes the formation of S-adenosylmethionine (AdoMet) from methionine and ATP. The overall synthetic reaction is composed of two sequential steps, AdoMet formation and the subsequent tripolyphosphate hydrolysis which occurs prior to release of AdoMet from the enzyme. The sequence is that of S-adenosylmethionine synthase from Synechococcus sp. (strain CC9311).